A 225-amino-acid chain; its full sequence is Small ribosomal subunit protein uS2 (225 aa).

A compositionally biased stretch (basic and acidic residues) spans 1 to 14; that stretch reads MAEAKPAPEKEAAA. Positions 1-33 are disordered; the sequence is MAEAKPAPEKEAAAKTESVPVETEGEGPSVKEG.

It belongs to the universal ribosomal protein uS2 family.

This is Small ribosomal subunit protein uS2 from Methanosarcina barkeri (strain Fusaro / DSM 804).